The chain runs to 238 residues: Leucine-rich repeat-containing protein 57 (238 aa).

8 LRR repeats span residues 10–36, 37–62, 64–82, 83–106, 108–128, 129–152, 154–173, and 174–199; these read LETS…LQKL, TANL…SFQH, KSFT…DIGK, LKKL…IGQL, SLRT…GLGT, LRQL…VAEL, AIEI…EVSR, and TPRL…ILTD.

In Danio rerio (Zebrafish), this protein is Leucine-rich repeat-containing protein 57 (lrrc57).